The primary structure comprises 302 residues: Protoheme IX farnesyltransferase (302 aa).

9 helical membrane passes run V27–V47, L53–I73, L100–V120, L121–L141, I149–G169, P175–I195, V215–V235, F237–F257, and A273–V293.

It belongs to the UbiA prenyltransferase family. Protoheme IX farnesyltransferase subfamily.

The protein resides in the cell inner membrane. It catalyses the reaction heme b + (2E,6E)-farnesyl diphosphate + H2O = Fe(II)-heme o + diphosphate. It functions in the pathway porphyrin-containing compound metabolism; heme O biosynthesis; heme O from protoheme: step 1/1. Converts heme B (protoheme IX) to heme O by substitution of the vinyl group on carbon 2 of heme B porphyrin ring with a hydroxyethyl farnesyl side group. The chain is Protoheme IX farnesyltransferase from Thioalkalivibrio sulfidiphilus (strain HL-EbGR7).